Consider the following 256-residue polypeptide: Homeobox-leucine zipper protein HOX18 (256 aa).

Positions 52–117 (YDHGRDEEQA…GGGGGTRKKL (66 aa)) are disordered. Positions 102–112 (DGGSGSGGGGG) are enriched in gly residues. A DNA-binding region (homeobox) is located at residues 112–171 (GTRKKLQLTKEQSTLLEDSFRVHNILSHAQKHELARQLKLKPRQVEVWFQNRRARTKLKQ). The tract at residues 170–214 (KQTEVDCEFLKRCCESLTEENKQLKHELMELRRLASAAAAAAGSQ) is leucine-zipper.

Belongs to the HD-ZIP homeobox family. Class II subfamily. As to expression, expressed in roots, leaf sheaths and blades and panicles.

The protein resides in the nucleus. In terms of biological role, probable transcription factor. The chain is Homeobox-leucine zipper protein HOX18 (HOX18) from Oryza sativa subsp. indica (Rice).